A 48-amino-acid chain; its full sequence is uncharacterized protein (48 aa).

This is an uncharacterized protein from Mus musculus domesticus (western European house mouse).